The sequence spans 262 residues: Tritrans,polycis-undecaprenyl-diphosphate synthase (geranylgeranyl-diphosphate specific) (262 aa).

D40 is a catalytic residue. D40 provides a ligand contact to Mg(2+). Residues 41–44, W45, and 85–87 contribute to the substrate site; these read GNRR and STE. N88 functions as the Proton acceptor in the catalytic mechanism. Substrate contacts are provided by residues R92, R211, and 217–219; that span reads RIS. Residue E230 coordinates Mg(2+).

The protein belongs to the UPP synthase family. Homodimer. Requires Mg(2+) as cofactor.

It catalyses the reaction geranylgeranyl diphosphate + 7 isopentenyl diphosphate = tri-trans,hepta-cis-undecaprenyl diphosphate + 7 diphosphate. In terms of biological role, catalyzes the sequential condensation of isopentenyl diphosphate (IPP) with geranylgeranyl diphosphate (GGPP) to yield (2Z,6Z,10Z,14Z,18Z,22Z,26Z,30E,34E,38E)-undecaprenyl diphosphate (tritrans,heptacis-UPP). It is probably the precursor of glycosyl carrier lipids. In Sulfurisphaera tokodaii (strain DSM 16993 / JCM 10545 / NBRC 100140 / 7) (Sulfolobus tokodaii), this protein is Tritrans,polycis-undecaprenyl-diphosphate synthase (geranylgeranyl-diphosphate specific).